Consider the following 227-residue polypeptide: Cytochrome c oxidase subunit 2 (227 aa).

Topologically, residues 1–14 are mitochondrial intermembrane; it reads MAYPFQLGLQDATS. Residues 15-45 traverse the membrane as a helical segment; it reads PIMEELTSFHDHTLMIVFLISSLVLYIILLM. Topologically, residues 46–59 are mitochondrial matrix; the sequence is LTTKLTHTSTMDAQ. Residues 60–87 form a helical membrane-spanning segment; it reads EVETIWTILPAVILILIALPSLRILYMM. Over 88–227 the chain is Mitochondrial intermembrane; the sequence is DEINNPALTV…HFENWSASMI (140 aa). The Cu cation site is built by His-161, Cys-196, Glu-198, Cys-200, His-204, and Met-207. Glu-198 contributes to the Mg(2+) binding site.

This sequence belongs to the cytochrome c oxidase subunit 2 family. Component of the cytochrome c oxidase (complex IV, CIV), a multisubunit enzyme composed of 14 subunits. The complex is composed of a catalytic core of 3 subunits MT-CO1, MT-CO2 and MT-CO3, encoded in the mitochondrial DNA, and 11 supernumerary subunits COX4I, COX5A, COX5B, COX6A, COX6B, COX6C, COX7A, COX7B, COX7C, COX8 and NDUFA4, which are encoded in the nuclear genome. The complex exists as a monomer or a dimer and forms supercomplexes (SCs) in the inner mitochondrial membrane with NADH-ubiquinone oxidoreductase (complex I, CI) and ubiquinol-cytochrome c oxidoreductase (cytochrome b-c1 complex, complex III, CIII), resulting in different assemblies (supercomplex SCI(1)III(2)IV(1) and megacomplex MCI(2)III(2)IV(2)). Found in a complex with TMEM177, COA6, COX18, COX20, SCO1 and SCO2. Interacts with TMEM177 in a COX20-dependent manner. Interacts with COX20. Interacts with COX16. Requires Cu cation as cofactor.

It localises to the mitochondrion inner membrane. The catalysed reaction is 4 Fe(II)-[cytochrome c] + O2 + 8 H(+)(in) = 4 Fe(III)-[cytochrome c] + 2 H2O + 4 H(+)(out). Component of the cytochrome c oxidase, the last enzyme in the mitochondrial electron transport chain which drives oxidative phosphorylation. The respiratory chain contains 3 multisubunit complexes succinate dehydrogenase (complex II, CII), ubiquinol-cytochrome c oxidoreductase (cytochrome b-c1 complex, complex III, CIII) and cytochrome c oxidase (complex IV, CIV), that cooperate to transfer electrons derived from NADH and succinate to molecular oxygen, creating an electrochemical gradient over the inner membrane that drives transmembrane transport and the ATP synthase. Cytochrome c oxidase is the component of the respiratory chain that catalyzes the reduction of oxygen to water. Electrons originating from reduced cytochrome c in the intermembrane space (IMS) are transferred via the dinuclear copper A center (CU(A)) of subunit 2 and heme A of subunit 1 to the active site in subunit 1, a binuclear center (BNC) formed by heme A3 and copper B (CU(B)). The BNC reduces molecular oxygen to 2 water molecules using 4 electrons from cytochrome c in the IMS and 4 protons from the mitochondrial matrix. This chain is Cytochrome c oxidase subunit 2 (MT-CO2), found in Anisomys imitator (Uneven-toothed rat).